We begin with the raw amino-acid sequence, 468 residues long: DNA polymerase IV 1 (468 aa).

The region spanning 6 to 188 (VLHLDMDAFF…LPVRRLWGIG (183 aa)) is the UmuC domain. The Mg(2+) site is built by D10 and D105. Residue E106 is part of the active site.

The protein belongs to the DNA polymerase type-Y family. In terms of assembly, monomer. It depends on Mg(2+) as a cofactor.

It is found in the cytoplasm. It catalyses the reaction DNA(n) + a 2'-deoxyribonucleoside 5'-triphosphate = DNA(n+1) + diphosphate. Functionally, poorly processive, error-prone DNA polymerase involved in untargeted mutagenesis. Copies undamaged DNA at stalled replication forks, which arise in vivo from mismatched or misaligned primer ends. These misaligned primers can be extended by PolIV. Exhibits no 3'-5' exonuclease (proofreading) activity. May be involved in translesional synthesis, in conjunction with the beta clamp from PolIII. This is DNA polymerase IV 1 (dinB1) from Mycobacterium tuberculosis (strain CDC 1551 / Oshkosh).